A 72-amino-acid polypeptide reads, in one-letter code: Translation initiation factor IF-1 (72 aa).

One can recognise an S1-like domain in the interval 1 to 72 (MAKQDVIELE…TRGRITYRYK (72 aa)).

The protein belongs to the IF-1 family. As to quaternary structure, component of the 30S ribosomal translation pre-initiation complex which assembles on the 30S ribosome in the order IF-2 and IF-3, IF-1 and N-formylmethionyl-tRNA(fMet); mRNA recruitment can occur at any time during PIC assembly.

The protein resides in the cytoplasm. Functionally, one of the essential components for the initiation of protein synthesis. Stabilizes the binding of IF-2 and IF-3 on the 30S subunit to which N-formylmethionyl-tRNA(fMet) subsequently binds. Helps modulate mRNA selection, yielding the 30S pre-initiation complex (PIC). Upon addition of the 50S ribosomal subunit IF-1, IF-2 and IF-3 are released leaving the mature 70S translation initiation complex. This Staphylococcus aureus (strain USA300 / TCH1516) protein is Translation initiation factor IF-1.